We begin with the raw amino-acid sequence, 311 residues long: MATYLDFEQKIKNIQDEIESSIVKGDSHAKEILERELKKEVERVYSNLSDYQKLQLARHPDRPYAMDYIKLILKDAYEIHGDRHFSDDGAIVAFLGYIEGEKVIVIGEEKGRGTKNKLARNFGMPNPEGYRKALRIAKLAERFEIPLLMLIDTPGAYPGIGAEERGQSEAIAKNLQEFSQLKIPTVSVVIGEGGSGGALAIGVADRLAMMRYSVFSVISPEGCAAILWNDPSKIESATKAMKITPDELKKANLIDDIIEEPEIGAHRDKEGAAKSLVNYFLKSLEEIRGEEHYLQKRFDRLMSYGSFTQSA.

The region spanning 36-286 is the CoA carboxyltransferase C-terminal domain; it reads ELKKEVERVY…VNYFLKSLEE (251 aa).

This sequence belongs to the AccA family. In terms of assembly, acetyl-CoA carboxylase is a heterohexamer composed of biotin carboxyl carrier protein (AccB), biotin carboxylase (AccC) and two subunits each of ACCase subunit alpha (AccA) and ACCase subunit beta (AccD).

It is found in the cytoplasm. It catalyses the reaction N(6)-carboxybiotinyl-L-lysyl-[protein] + acetyl-CoA = N(6)-biotinyl-L-lysyl-[protein] + malonyl-CoA. The protein operates within lipid metabolism; malonyl-CoA biosynthesis; malonyl-CoA from acetyl-CoA: step 1/1. In terms of biological role, component of the acetyl coenzyme A carboxylase (ACC) complex. First, biotin carboxylase catalyzes the carboxylation of biotin on its carrier protein (BCCP) and then the CO(2) group is transferred by the carboxyltransferase to acetyl-CoA to form malonyl-CoA. This chain is Acetyl-coenzyme A carboxylase carboxyl transferase subunit alpha, found in Wolinella succinogenes (strain ATCC 29543 / DSM 1740 / CCUG 13145 / JCM 31913 / LMG 7466 / NCTC 11488 / FDC 602W) (Vibrio succinogenes).